The chain runs to 330 residues: GTPase Obg (330 aa).

An Obg domain is found at 1 to 159; sequence MHFIDEVKIY…MWIHLSLKLL (159 aa). In terms of domain architecture, OBG-type G spans 160-327; sequence SDVGLVGFPN…IVKLALETIK (168 aa). GTP is bound by residues 166-173, 191-195, 212-215, 279-282, and 308-310; these read GFPNAGKS, FTTLV, DIPG, NKCD, and STY. Positions 173 and 193 each coordinate Mg(2+).

The protein belongs to the TRAFAC class OBG-HflX-like GTPase superfamily. OBG GTPase family. As to quaternary structure, monomer. Requires Mg(2+) as cofactor.

The protein resides in the cytoplasm. In terms of biological role, an essential GTPase which binds GTP, GDP and possibly (p)ppGpp with moderate affinity, with high nucleotide exchange rates and a fairly low GTP hydrolysis rate. Plays a role in control of the cell cycle, stress response, ribosome biogenesis and in those bacteria that undergo differentiation, in morphogenesis control. The chain is GTPase Obg from Rickettsia massiliae (strain Mtu5).